A 932-amino-acid chain; its full sequence is Protocadherin gamma-A7 (932 aa).

The N-terminal stretch at 1–28 is a signal peptide; that stretch reads MAAQPRGGDYRGFFLLSILLGTPWEAWA. 6 Cadherin domains span residues 29–133, 134–242, 243–347, 348–452, 453–562, and 570–682; these read GRIL…VPRF, LTEE…TPVF, SLPQ…APEV, TMTS…PPTF, PHSS…PPEI, and DGST…EPSD. Residues 29 to 692 lie on the Extracellular side of the membrane; that stretch reads GRILYSVSEE…GPYNYDLTLY (664 aa). 2 N-linked (GlcNAc...) asparagine glycosylation sites follow: Asn-419 and Asn-545. A helical transmembrane segment spans residues 693-713; that stretch reads LVVAVATVSCVFLAFVLVLLA. Topologically, residues 714-932 are cytoplasmic; the sequence is LRLRRWHKSR…KKKSGKKEKK (219 aa). Disordered stretches follow at residues 805–841 and 902–932; these read PSIQ…WPNN and ATLT…KEKK. The segment covering 922-932 has biased composition (basic residues); it reads NKKKSGKKEKK.

Its subcellular location is the cell membrane. Its function is as follows. Potential calcium-dependent cell-adhesion protein. May be involved in the establishment and maintenance of specific neuronal connections in the brain. The chain is Protocadherin gamma-A7 (PCDHGA7) from Homo sapiens (Human).